The primary structure comprises 362 residues: MIIDRVEVETINSFSKLELLKEVYGLISILPILTLLLGITIEVLVIVWLEREISASIQQRIGPEYAGPLGLLQAIADGTKLLLKEDILPSRGDIPLFSIGPSIAVISILLSFLVIPLGYHFVLADLSIGVFLWIAISSIAPIGLLMAGYSSNNKYSFLGGLRAAAQSISYEIPLTFCVLAISLLSNSSSTVDIVEAQSKYGFFGWNIWRQPIGFLVFLISSLAECERLPFDLPEAEEELVAGYQTEYSGIKYGLFYLVSYLNLLVSSLFVTVLYLGGWNLSIPYISFFDFFQMNNAVGILEMTIGIFITLTKAYLFLFISITIRWTLPRMRMDQLLNLGWKFLLPISLGNLLLTTSSQLVSL.

Helical transmembrane passes span isoleucine 29–leucine 49, isoleucine 103–leucine 123, isoleucine 128–glycine 148, alanine 164–leucine 184, phenylalanine 202–leucine 222, tyrosine 247–serine 267, threonine 303–isoleucine 323, and leucine 335–threonine 355.

This sequence belongs to the complex I subunit 1 family. NDH is composed of at least 16 different subunits, 5 of which are encoded in the nucleus.

Its subcellular location is the plastid. The protein resides in the chloroplast thylakoid membrane. It carries out the reaction a plastoquinone + NADH + (n+1) H(+)(in) = a plastoquinol + NAD(+) + n H(+)(out). The catalysed reaction is a plastoquinone + NADPH + (n+1) H(+)(in) = a plastoquinol + NADP(+) + n H(+)(out). Its function is as follows. NDH shuttles electrons from NAD(P)H:plastoquinone, via FMN and iron-sulfur (Fe-S) centers, to quinones in the photosynthetic chain and possibly in a chloroplast respiratory chain. The immediate electron acceptor for the enzyme in this species is believed to be plastoquinone. Couples the redox reaction to proton translocation, and thus conserves the redox energy in a proton gradient. The chain is NAD(P)H-quinone oxidoreductase subunit 1, chloroplastic from Agrostis stolonifera (Creeping bentgrass).